The sequence spans 631 residues: Phosphomethylpyrimidine synthase (631 aa).

Substrate contacts are provided by residues Asn-239, Met-268, Tyr-297, His-333, 353-355, 394-397, and Glu-433; these read SRG and DGLR. His-437 provides a ligand contact to Zn(2+). Residue Tyr-460 coordinates substrate. His-501 is a Zn(2+) binding site. Positions 581, 584, and 589 each coordinate [4Fe-4S] cluster.

This sequence belongs to the ThiC family. As to quaternary structure, homodimer. It depends on [4Fe-4S] cluster as a cofactor.

The catalysed reaction is 5-amino-1-(5-phospho-beta-D-ribosyl)imidazole + S-adenosyl-L-methionine = 4-amino-2-methyl-5-(phosphooxymethyl)pyrimidine + CO + 5'-deoxyadenosine + formate + L-methionine + 3 H(+). The protein operates within cofactor biosynthesis; thiamine diphosphate biosynthesis. Functionally, catalyzes the synthesis of the hydroxymethylpyrimidine phosphate (HMP-P) moiety of thiamine from aminoimidazole ribotide (AIR) in a radical S-adenosyl-L-methionine (SAM)-dependent reaction. The chain is Phosphomethylpyrimidine synthase from Salmonella enteritidis PT4 (strain P125109).